The chain runs to 346 residues: D-alanine--D-alanine ligase (346 aa).

In terms of domain architecture, ATP-grasp spans 125–325 (KRIWRSEGLP…YPALCLEVLR (201 aa)). Position 151–206 (151–206 (FAALGSPMIVKPDREGSTIGLTKVTQIEQCGAAYALAARHDAMVLCEQFVKGDEVT)) interacts with ATP. 3 residues coordinate Mg(2+): Asp-278, Glu-292, and Asn-294.

Belongs to the D-alanine--D-alanine ligase family. It depends on Mg(2+) as a cofactor. The cofactor is Mn(2+).

It localises to the cytoplasm. It carries out the reaction 2 D-alanine + ATP = D-alanyl-D-alanine + ADP + phosphate + H(+). It participates in cell wall biogenesis; peptidoglycan biosynthesis. Cell wall formation. The polypeptide is D-alanine--D-alanine ligase (Albidiferax ferrireducens (strain ATCC BAA-621 / DSM 15236 / T118) (Rhodoferax ferrireducens)).